The chain runs to 168 residues: S-ribosylhomocysteine lyase (168 aa).

The Fe cation site is built by His-54, His-58, and Cys-128.

It belongs to the LuxS family. Homodimer. Requires Fe cation as cofactor.

It catalyses the reaction S-(5-deoxy-D-ribos-5-yl)-L-homocysteine = (S)-4,5-dihydroxypentane-2,3-dione + L-homocysteine. Involved in the synthesis of autoinducer 2 (AI-2) which is secreted by bacteria and is used to communicate both the cell density and the metabolic potential of the environment. The regulation of gene expression in response to changes in cell density is called quorum sensing. Catalyzes the transformation of S-ribosylhomocysteine (RHC) to homocysteine (HC) and 4,5-dihydroxy-2,3-pentadione (DPD). This Actinobacillus succinogenes (strain ATCC 55618 / DSM 22257 / CCUG 43843 / 130Z) protein is S-ribosylhomocysteine lyase.